We begin with the raw amino-acid sequence, 340 residues long: MSELEQLRQEAEQLRNQIRDARKACGDSTLTQITAGLDPVGRIQMRTRRTLRGHLAKIYAMHWGTDSRLLVSASQDGKLIIWDSYTTNKVHAIPLRSSWVMTCAYAPSGNFVACGGLDNICSIYSLKTREGNVRVSRELPGHTGYLSCCRFLDDNQIITSSGDTTCALWDIETGQQTVGFAGHSGDVMSLSLAPDGRTFVSGACDASIKLWDVRDSMCRQTFIGHESDINAVAFFPNGYAFTTGSDDATCRLFDLRADQELLMYSHDNIICGITSVAFSRSGRLLLAGYDDFNCNIWDAMKGDRAGVLAGHDNRVSCLGVTDDGMAVATGSWDSFLKIWN.

An N-acetylserine modification is found at Ser2. 7 WD repeats span residues 53–83, 95–125, 141–170, 182–212, 224–254, 268–298, and 310–340; these read GHLA…IIWD, LRSS…SIYS, GHTG…ALWD, GHSG…KLWD, GHES…RLFD, NIIC…NIWD, and GHDN…KIWN. Phosphotyrosine is present on Tyr239.

This sequence belongs to the WD repeat G protein beta family. G proteins are composed of 3 units, alpha, beta and gamma. In this context, interacts with GNAI2 and GNG2. Interacts with ARHGEF18 and RASD2. Interacts with ATXN10. Interacts with SCN8A. As to expression, expressed in all cardiac subcompartments and in the brain, with highest levels in the atrioventricular node and brain.

It is found in the cytoplasm. The protein resides in the perinuclear region. The protein localises to the cell membrane. Guanine nucleotide-binding proteins (G proteins) are involved as a modulator or transducer in various transmembrane signaling systems. The beta and gamma chains are required for the GTPase activity, for replacement of GDP by GTP, and for G protein-effector interaction. This chain is Guanine nucleotide-binding protein G(I)/G(S)/G(T) subunit beta-2 (GNB2), found in Homo sapiens (Human).